Reading from the N-terminus, the 195-residue chain is MPTPTKGARLGGSPAHERLLLANLATALFEHGGITTTEAKARRLRPYAERLVTHAKRGDLHARRRVMRVVRNNSVVHTLFTEIGPRYADRPGGYTRIVKLGPRRGDAAPMARIELVEALTIAQTAVSEAERARGTRFAARKAPTGATAEAADDLKNESPTAAAVAAEAQAEQPTAEAVAADDAATTEAKDTKPES.

The interval 132-195 (ARGTRFAARK…TEAKDTKPES (64 aa)) is disordered. Positions 159-186 (PTAAAVAAEAQAEQPTAEAVAADDAATT) are enriched in low complexity.

The protein belongs to the bacterial ribosomal protein bL17 family. As to quaternary structure, part of the 50S ribosomal subunit. Contacts protein L32.

The chain is Large ribosomal subunit protein bL17 from Parafrankia sp. (strain EAN1pec).